Consider the following 592-residue polypeptide: Aspartate--tRNA ligase (592 aa).

Glutamate 171 contributes to the L-aspartate binding site. The interval 195–198 (QLFK) is aspartate. Arginine 217 is a binding site for L-aspartate. ATP contacts are provided by residues 217 to 219 (RDE) and glutamine 226. Residue histidine 448 participates in L-aspartate binding. Residue glutamate 482 participates in ATP binding. Arginine 489 lines the L-aspartate pocket. 534-537 (GLDR) contributes to the ATP binding site.

The protein belongs to the class-II aminoacyl-tRNA synthetase family. Type 1 subfamily. Homodimer.

The protein resides in the cytoplasm. The enzyme catalyses tRNA(Asp) + L-aspartate + ATP = L-aspartyl-tRNA(Asp) + AMP + diphosphate. Its function is as follows. Catalyzes the attachment of L-aspartate to tRNA(Asp) in a two-step reaction: L-aspartate is first activated by ATP to form Asp-AMP and then transferred to the acceptor end of tRNA(Asp). In Pseudoalteromonas translucida (strain TAC 125), this protein is Aspartate--tRNA ligase.